Consider the following 730-residue polypeptide: Wall-associated receptor kinase-like 1 (730 aa).

The first 25 residues, 1-25, serve as a signal peptide directing secretion; that stretch reads MKTKTSIFQFIVASVLTLLINDSSA. At 26–358 the chain is on the extracellular side; that stretch reads ATPPPPISNS…KPTKPPVLQG (333 aa). N-linked (GlcNAc...) asparagine glycans are attached at residues Asn-34, Asn-40, Asn-70, Asn-77, Asn-92, Asn-119, Asn-132, Asn-211, Asn-233, Asn-269, and Asn-281. Residues 282-341 are atypical EGF-like; the sequence is CSCEYDYFSGMSYRNCYCDYGYTGNPYLRGGCVDTDSCEGNHNCGEDAHCVNMPGPMSMC. 3 disulfide bridges follow: Cys-284–Cys-297, Cys-319–Cys-331, and Cys-325–Cys-341. A helical membrane pass occupies residues 359-379; sequence ILIGLSGLVFFVGLFWLFKLI. Topologically, residues 380-730 are cytoplasmic; that stretch reads KKRRNINRSK…DQPMAINNKR (351 aa). Positions 429–702 constitute a Protein kinase domain; that stretch reads FSIDRVLGQG…KEVSNELERI (274 aa). Residues 435–443 and Lys-457 each bind ATP; that span reads LGQGGQGTV. Tyr-502 is modified (phosphotyrosine). Asp-554 serves as the catalytic Proton acceptor. Thr-588 and Thr-593 each carry phosphothreonine. Tyr-601 bears the Phosphotyrosine mark. The segment at 685–730 is disordered; that stretch reads KGKNRPNMKEVSNELERIRSSPEDLDVRTENEDEEEDQPMAINNKR. The span at 691-714 shows a compositional bias: basic and acidic residues; that stretch reads NMKEVSNELERIRSSPEDLDVRTE.

It belongs to the protein kinase superfamily. Ser/Thr protein kinase family. In terms of tissue distribution, preferentially expressed in roots and flowers.

The protein localises to the membrane. The enzyme catalyses L-seryl-[protein] + ATP = O-phospho-L-seryl-[protein] + ADP + H(+). It carries out the reaction L-threonyl-[protein] + ATP = O-phospho-L-threonyl-[protein] + ADP + H(+). Serine/threonine-protein kinase that may function as a signaling receptor of extracellular matrix component. The polypeptide is Wall-associated receptor kinase-like 1 (WAKL1) (Arabidopsis thaliana (Mouse-ear cress)).